Here is a 118-residue protein sequence, read N- to C-terminus: Putative pterin-4-alpha-carbinolamine dehydratase (118 aa).

Belongs to the pterin-4-alpha-carbinolamine dehydratase family.

It carries out the reaction (4aS,6R)-4a-hydroxy-L-erythro-5,6,7,8-tetrahydrobiopterin = (6R)-L-erythro-6,7-dihydrobiopterin + H2O. In Xanthomonas campestris pv. campestris (strain B100), this protein is Putative pterin-4-alpha-carbinolamine dehydratase.